A 223-amino-acid chain; its full sequence is Probable transaldolase (223 aa).

The active-site Schiff-base intermediate with substrate is Lys-83.

This sequence belongs to the transaldolase family. Type 3B subfamily.

It is found in the cytoplasm. It carries out the reaction D-sedoheptulose 7-phosphate + D-glyceraldehyde 3-phosphate = D-erythrose 4-phosphate + beta-D-fructose 6-phosphate. The protein operates within carbohydrate degradation; pentose phosphate pathway; D-glyceraldehyde 3-phosphate and beta-D-fructose 6-phosphate from D-ribose 5-phosphate and D-xylulose 5-phosphate (non-oxidative stage): step 2/3. Functionally, transaldolase is important for the balance of metabolites in the pentose-phosphate pathway. The protein is Probable transaldolase of Myxococcus xanthus (strain DK1622).